A 339-amino-acid polypeptide reads, in one-letter code: NADH-quinone oxidoreductase subunit H (339 aa).

The next 8 membrane-spanning stretches (helical) occupy residues 9–29, 82–102, 115–135, 161–181, 187–207, 235–255, 275–295, and 311–331; these read IFPLIIIALKVVAITIPLILC, ILFVLAPMITFILSLIGWAVI, VGVLYILAISSLSVYGIIIAG, MGLVIITVLLTTGTLNLSQIV, MPWWIDLMLMPMGVVFFISVL, MGFALFFLGEYANMILVSAMT, IPGFFWFVFKVGFLLFCFLWI, and GWKVFLPLTLFWVVLVSSVLI.

The protein belongs to the complex I subunit 1 family. NDH-1 is composed of 14 different subunits. Subunits NuoA, H, J, K, L, M, N constitute the membrane sector of the complex.

It is found in the cell inner membrane. The catalysed reaction is a quinone + NADH + 5 H(+)(in) = a quinol + NAD(+) + 4 H(+)(out). In terms of biological role, NDH-1 shuttles electrons from NADH, via FMN and iron-sulfur (Fe-S) centers, to quinones in the respiratory chain. The immediate electron acceptor for the enzyme in this species is believed to be ubiquinone. Couples the redox reaction to proton translocation (for every two electrons transferred, four hydrogen ions are translocated across the cytoplasmic membrane), and thus conserves the redox energy in a proton gradient. This subunit may bind ubiquinone. This is NADH-quinone oxidoreductase subunit H from Rickettsia bellii (strain OSU 85-389).